The following is a 2646-amino-acid chain: Probable helicase senataxin (2646 aa).

Serine 102 carries the phosphoserine modification. Residue lysine 339 forms a Glycyl lysine isopeptide (Lys-Gly) (interchain with G-Cter in SUMO1) linkage. At serine 640 the chain carries Phosphoserine. Disordered stretches follow at residues lysine 705–aspartate 734 and glycine 825–aspartate 876. A compositionally biased stretch (polar residues) spans glutamate 714 to asparagine 727. Residues leucine 867–aspartate 876 are compositionally biased toward acidic residues. Phosphoserine occurs at positions 870, 871, 872, 938, 1002, and 1004. A disordered region spans residues isoleucine 1001–lysine 1023. Acidic residues predominate over residues aspartate 1003–glutamate 1014. Lysine 1051 participates in a covalent cross-link: Glycyl lysine isopeptide (Lys-Gly) (interchain with G-Cter in SUMO2). Residues arginine 1122 to glycine 1133 are compositionally biased toward basic and acidic residues. A disordered region spans residues arginine 1122 to serine 1245. Residues glycine 1147 to tyrosine 1156 show a composition bias toward basic residues. The segment covering leucine 1176–serine 1189 has biased composition (basic and acidic residues). The segment covering threonine 1196–serine 1211 has biased composition (polar residues). The segment covering threonine 1212–arginine 1222 has biased composition (basic residues). Serine 1318 is modified (phosphoserine). Glycyl lysine isopeptide (Lys-Gly) (interchain with G-Cter in SUMO2) cross-links involve residues lysine 1328, lysine 1329, and lysine 1398. Serine 1472 is modified (phosphoserine). Threonine 1474 carries the post-translational modification Phosphothreonine. Positions leucine 1591 to glutamine 1627 are disordered. Over residues leucine 1595–glutamine 1613 the composition is skewed to polar residues. Glycine 1939–serine 1946 lines the ATP pocket. Positions lysine 2046–leucine 2063 match the Bipartite nuclear localization signal motif. Residue threonine 2450 is modified to Phosphothreonine. Disordered regions lie at residues threonine 2450–aspartate 2472, histidine 2486–leucine 2506, and serine 2569–valine 2624. Basic and acidic residues-rich tracts occupy residues glycine 2496–leucine 2506 and lysine 2593–arginine 2608. The tract at residues arginine 2632–leucine 2646 is necessary for nuclear localization.

This sequence belongs to the DNA2/NAM7 helicase family. As to quaternary structure, homodimer. Interacts with PER2; the interaction inhibits termination of circadian target genes. Interacts with CHD4, POLR2A, PRKDC and TRIM28. Interacts with UBE2I. Interacts (via N-terminus domain) with EXOSC9 (via C-terminus region); the interaction enhances SETX sumoylation. Interacts with NCL (via N-terminus domain). Interacts with PABPN1, PABPC1 and SF3B1. Interacts with SMN1/SMN2 and POLR2A; SMN1/SMN2 recruits SETX to POLR2A. Post-translationally, ubiquitinated. Sumoylated preferentially with SUMO2 or SUMO3. Expressed in cerebellum, hippocampus, olfactory bulb, Bergmann glial fibers, stellate cells and Purkinje cells. Expressed in the epithelial cells of the lens but not in mature lens fiber cells. Expressed in the retina (highly expressed in inner and outer segments of photoreceptors and outer plexiform layer cells but weakly expressed in the inner plexiform and ganglion cell layers). Expressed in the kidney.

Its subcellular location is the nucleus. It is found in the nucleoplasm. The protein resides in the nucleolus. It localises to the cytoplasm. The protein localises to the chromosome. Its subcellular location is the telomere. It is found in the cell projection. The protein resides in the axon. It localises to the growth cone. Its function is as follows. Probable RNA/DNA helicase involved in diverse aspects of RNA metabolism and genomic integrity. Plays a role in transcription regulation by its ability to modulate RNA Polymerase II (Pol II) binding to chromatin and through its interaction with proteins involved in transcription. Contributes to the mRNA splicing efficiency and splice site selection. Required for the resolution of R-loop RNA-DNA hybrid formation at G-rich pause sites located downstream of the poly(A) site, allowing XRN2 recruitment and XRN2-mediated degradation of the downstream cleaved RNA and hence efficient RNA polymerase II (RNAp II) transcription termination. Required for the 3' transcriptional termination of PER1 and CRY2, thus playing an important role in the circadian rhythm regulation. Involved in DNA double-strand breaks damage response generated by oxidative stress. In association with RRP45, targets the RNA exosome complex to sites of transcription-induced DNA damage. Plays a role in the development and maturation of germ cells: essential for male meiosis, acting at the interface of transcription and meiotic recombination, and in the process of gene silencing during meiotic sex chromosome inactivation (MSCI). Plays a role in neurite outgrowth in hippocampal cells through FGF8-activated signaling pathways. Inhibits retinoic acid-induced apoptosis. May be involved in telomeric stability through the regulation of telomere repeat-containing RNA (TERRA) transcription. This chain is Probable helicase senataxin, found in Mus musculus (Mouse).